Reading from the N-terminus, the 398-residue chain is Stearoyl-[acyl-carrier-protein] 9-desaturase, chloroplastic (398 aa).

The transit peptide at 1-34 directs the protein to the chloroplast; the sequence is MALKLNPLASQPYNFPSSARPPISTFRSPKFLCL. 6 residues coordinate Fe cation: Glu-140, Glu-178, His-181, Glu-231, Glu-264, and His-267.

This sequence belongs to the fatty acid desaturase type 2 family. In terms of assembly, homodimer. The cofactor is Fe(2+).

It is found in the plastid. The protein localises to the chloroplast. The enzyme catalyses octadecanoyl-[ACP] + 2 reduced [2Fe-2S]-[ferredoxin] + O2 + 2 H(+) = (9Z)-octadecenoyl-[ACP] + 2 oxidized [2Fe-2S]-[ferredoxin] + 2 H2O. Its pathway is lipid metabolism; fatty acid metabolism. Its function is as follows. Converts stearoyl-ACP to oleoyl-ACP by introduction of a cis double bond between carbons 9 and 10 of the acyl chain. In Brassica napus (Rape), this protein is Stearoyl-[acyl-carrier-protein] 9-desaturase, chloroplastic.